Here is a 384-residue protein sequence, read N- to C-terminus: Lipid-A-disaccharide synthase (384 aa).

The protein belongs to the LpxB family.

It carries out the reaction a lipid X + a UDP-2-N,3-O-bis[(3R)-3-hydroxyacyl]-alpha-D-glucosamine = a lipid A disaccharide + UDP + H(+). Its pathway is bacterial outer membrane biogenesis; LPS lipid A biosynthesis. Functionally, condensation of UDP-2,3-diacylglucosamine and 2,3-diacylglucosamine-1-phosphate to form lipid A disaccharide, a precursor of lipid A, a phosphorylated glycolipid that anchors the lipopolysaccharide to the outer membrane of the cell. The polypeptide is Lipid-A-disaccharide synthase (Neisseria meningitidis serogroup C / serotype 2a (strain ATCC 700532 / DSM 15464 / FAM18)).